The sequence spans 150 residues: UPF0102 protein sll0189 (150 aa).

It belongs to the UPF0102 family.

The sequence is that of UPF0102 protein sll0189 from Synechocystis sp. (strain ATCC 27184 / PCC 6803 / Kazusa).